We begin with the raw amino-acid sequence, 166 residues long: Large ribosomal subunit protein eL14 (166 aa).

Residues 135–166 (KADGTPRVLKKDRRERLRAEKAKGGKKAAAKK) are disordered. Over residues 146 to 157 (DRRERLRAEKAK) the composition is skewed to basic and acidic residues.

This sequence belongs to the eukaryotic ribosomal protein eL14 family.

This chain is Large ribosomal subunit protein eL14 (RpL14), found in Drosophila melanogaster (Fruit fly).